Reading from the N-terminus, the 493-residue chain is Glutamyl-tRNA(Gln) amidotransferase subunit A (493 aa).

Active-site charge relay system residues include K79 and S159. The active-site Acyl-ester intermediate is S183.

The protein belongs to the amidase family. GatA subfamily. In terms of assembly, heterotrimer of A, B and C subunits.

It carries out the reaction L-glutamyl-tRNA(Gln) + L-glutamine + ATP + H2O = L-glutaminyl-tRNA(Gln) + L-glutamate + ADP + phosphate + H(+). Allows the formation of correctly charged Gln-tRNA(Gln) through the transamidation of misacylated Glu-tRNA(Gln) in organisms which lack glutaminyl-tRNA synthetase. The reaction takes place in the presence of glutamine and ATP through an activated gamma-phospho-Glu-tRNA(Gln). The polypeptide is Glutamyl-tRNA(Gln) amidotransferase subunit A (Brucella ovis (strain ATCC 25840 / 63/290 / NCTC 10512)).